We begin with the raw amino-acid sequence, 177 residues long: Macro domain-containing protein in non 5'region (177 aa).

Residues 1-177 (MSTSVSPVVR…VEFEEVLAMR (177 aa)) enclose the Macro domain.

Belongs to the MacroD-type family.

In Streptomyces griseus, this protein is Macro domain-containing protein in non 5'region.